A 105-amino-acid chain; its full sequence is Large ribosomal subunit protein uL24 (105 aa).

Belongs to the universal ribosomal protein uL24 family. As to quaternary structure, part of the 50S ribosomal subunit.

Functionally, one of two assembly initiator proteins, it binds directly to the 5'-end of the 23S rRNA, where it nucleates assembly of the 50S subunit. One of the proteins that surrounds the polypeptide exit tunnel on the outside of the subunit. This is Large ribosomal subunit protein uL24 from Rhodospirillum centenum (strain ATCC 51521 / SW).